Here is a 580-residue protein sequence, read N- to C-terminus: Probable inactive 1-aminocyclopropane-1-carboxylate synthase-like protein 2 (580 aa).

Residues 1-43 (MSENRNEGSSQAAKANSDTQTPSHFKVTHPRLRDQLKKKSSKK) form a disordered region. A compositionally biased stretch (polar residues) spans 7 to 23 (EGSSQAAKANSDTQTPS). Lysine 417 is modified (N6-(pyridoxal phosphate)lysine).

Belongs to the class-I pyridoxal-phosphate-dependent aminotransferase family.

The polypeptide is Probable inactive 1-aminocyclopropane-1-carboxylate synthase-like protein 2 (Accsl) (Mus musculus (Mouse)).